A 574-amino-acid polypeptide reads, in one-letter code: Interactor of HORMAD1 protein 1 (574 aa).

The disordered stretch occupies residues 113 to 133 (GLSKQFEEKKRRATDQSDSET). Positions 117–127 (QFEEKKRRATD) are enriched in basic and acidic residues. A coiled-coil region spans residues 217–240 (MEMKSTLKNLEVLVVEQTKNLQQF). 3 disordered regions span residues 267–324 (GHLK…GVWD), 372–393 (FSNL…GASQ), and 426–457 (TEQK…DRKQ). A compositionally biased stretch (low complexity) spans 272-284 (STSQTSPSLTQSL). Residues 372 to 381 (FSNLPSQRAG) are compositionally biased toward polar residues. The segment covering 431–449 (RPCRKRRRGKKQQPQRSKR) has biased composition (basic residues). 3 positions are modified to phosphoserine: Ser476, Ser569, and Ser570.

As to quaternary structure, part of the MCD recombinosome complex, at least composed of IHO1, REC114 and MEI4. Interacts with REC114. Interacts with MEI4. Interacts with HORMAD1. Interacts with ANKRD31. As to expression, detected in spermatocytes and testis (at protein level).

The protein localises to the chromosome. Functionally, required for DNA double-strand breaks (DSBs) formation in unsynapsed regions during meiotic recombination. Probably acts by forming a complex with MEI4 and REC114, which activates DSBs formation in unsynapsed regions, an essential step to ensure completion of synapsis. Not required for HORMAD1 functions in pairing-independent synaptonemal complex formation, ATR recruitment to unsynapsed axes, meiotic silencing of unsynapsed chromatin (MSUC) or meiotic surveillance. The polypeptide is Interactor of HORMAD1 protein 1 (Mus musculus (Mouse)).